Consider the following 225-residue polypeptide: MGPKATSGTRGRGKKVGTKTAAPLPKYKDLIVEAVVSLAERGGSSRQAIKKFIRDKYAVGAKFDGQFNLAVKRGLEAGELAQPKGPAGSIKLLKKAAQPKPEEAKRAAKPAKRVVKAAKPAKAKPAKAAKAAKPAKPVKAAKAASAVKPAARKLAKPVVKKVGSKKVATKNAVVGKKSVVSSAASKKLLAKKAVPKKTAGRKPLVGKKVVAVSRKPAAKKLAKSA.

The segment at 1–20 is disordered; it reads MGPKATSGTRGRGKKVGTKT. In terms of domain architecture, H15 spans 23 to 94; that stretch reads PLPKYKDLIV…GPAGSIKLLK (72 aa). A disordered region spans residues 95–147; the sequence is KAAQPKPEEAKRAAKPAKRVVKAAKPAKAKPAKAAKAAKPAKPVKAAKAASAV. The span at 107–127 shows a compositional bias: basic residues; it reads AAKPAKRVVKAAKPAKAKPAK. Residues 128-147 show a composition bias toward low complexity; it reads AAKAAKPAKPVKAAKAASAV.

Belongs to the histone H1/H5 family.

The protein resides in the nucleus. It localises to the chromosome. Its function is as follows. Could act as an H1-type linker histone. The chain is Histone H1 (HHOA) from Eremothecium gossypii (strain ATCC 10895 / CBS 109.51 / FGSC 9923 / NRRL Y-1056) (Yeast).